Reading from the N-terminus, the 596-residue chain is Pentatricopeptide repeat-containing protein At1g50270 (596 aa).

12 PPR repeats span residues 66 to 102, 103 to 136, 137 to 167, 168 to 202, 203 to 237, 239 to 269, 270 to 304, 305 to 339, 340 to 370, 371 to 405, 406 to 436, and 442 to 472; these read SIQL…GVIP, SRHT…GLDS, DPFV…AEDK, DVVT…GVAA, NEMT…GRVK, DVFI…MPSR, NVVT…DVAP, NEKT…SIEI, NTTA…LHEK, NVYT…HVSP, NEVT…MKGR, and KADH…MPME. The segment at 477–552 is type E motif; it reads VWGALFGSCL…SPGFSWIEVK (76 aa). A type E(+) motif region spans residues 553–584; it reads GKLCEFIAFDDKKPLESDDLYKTLDTVGVQMR.

The protein belongs to the PPR family. PCMP-E subfamily.

This chain is Pentatricopeptide repeat-containing protein At1g50270 (PCMP-E42), found in Arabidopsis thaliana (Mouse-ear cress).